The primary structure comprises 161 residues: Nucleotide-binding protein SAR11_0692 (161 aa).

Belongs to the YajQ family.

Its function is as follows. Nucleotide-binding protein. This Pelagibacter ubique (strain HTCC1062) protein is Nucleotide-binding protein SAR11_0692.